Reading from the N-terminus, the 120-residue chain is Ribonuclease P protein component (120 aa).

The protein belongs to the RnpA family. Consists of a catalytic RNA component (M1 or rnpB) and a protein subunit.

It carries out the reaction Endonucleolytic cleavage of RNA, removing 5'-extranucleotides from tRNA precursor.. In terms of biological role, RNaseP catalyzes the removal of the 5'-leader sequence from pre-tRNA to produce the mature 5'-terminus. It can also cleave other RNA substrates such as 4.5S RNA. The protein component plays an auxiliary but essential role in vivo by binding to the 5'-leader sequence and broadening the substrate specificity of the ribozyme. The protein is Ribonuclease P protein component of Acidothermus cellulolyticus (strain ATCC 43068 / DSM 8971 / 11B).